A 120-amino-acid chain; its full sequence is UPF0102 protein COXBURSA331_A1934 (120 aa).

Belongs to the UPF0102 family.

The protein is UPF0102 protein COXBURSA331_A1934 of Coxiella burnetii (strain RSA 331 / Henzerling II).